The following is a 199-amino-acid chain: V-type proton ATPase subunit E (199 aa).

This sequence belongs to the V-ATPase E subunit family.

Functionally, produces ATP from ADP in the presence of a proton gradient across the membrane. This Clostridium botulinum (strain 657 / Type Ba4) protein is V-type proton ATPase subunit E.